Here is a 354-residue protein sequence, read N- to C-terminus: Serum paraoxonase/arylesterase 2 (354 aa).

Cys-42 and Cys-352 form a disulfide bridge. Ca(2+) contacts are provided by Asp-53 and Asp-54. The active-site Proton acceptor is the His-114. Ca(2+)-binding residues include Ile-116, Asn-167, Asp-168, and Asn-223. N-linked (GlcNAc...) asparagine glycosylation occurs at Asn-254. Residues Asp-268 and Asn-269 each coordinate Ca(2+). 2 N-linked (GlcNAc...) asparagine glycosylation sites follow: Asn-269 and Asn-323.

This sequence belongs to the paraoxonase family. Homotrimer. Ca(2+) is required as a cofactor. Post-translationally, glycosylated. The signal sequence is not cleaved.

Its subcellular location is the membrane. It catalyses the reaction a phenyl acetate + H2O = a phenol + acetate + H(+). The enzyme catalyses an N-acyl-L-homoserine lactone + H2O = an N-acyl-L-homoserine + H(+). Its function is as follows. Capable of hydrolyzing lactones and a number of aromatic carboxylic acid esters. In Canis lupus familiaris (Dog), this protein is Serum paraoxonase/arylesterase 2 (PON2).